Reading from the N-terminus, the 425-residue chain is Metalloprotease AF_0655 (425 aa).

The protein belongs to the peptidase U62 family.

Probable metalloprotease. The chain is Metalloprotease AF_0655 from Archaeoglobus fulgidus (strain ATCC 49558 / DSM 4304 / JCM 9628 / NBRC 100126 / VC-16).